A 145-amino-acid chain; its full sequence is Glycine-rich protein (145 aa).

The first 19 residues, 1–19 (MKLTLAVVVVFAYIATTNA), serve as a signal peptide directing secretion.

In terms of tissue distribution, component of the acid-insoluble and acid-soluble organic matrix of calcified layers of the shell (at protein level).

The protein localises to the secreted. In Lottia gigantea (Giant owl limpet), this protein is Glycine-rich protein.